The primary structure comprises 1021 residues: Receptor-like protein EIX2 (1021 aa).

An N-terminal signal peptide occupies residues 1-24; that stretch reads MGKRTNPRHFLVTWSLLLLETAFG. Residues 25 to 109 form an N-cap region; sequence LTSREVNKTL…PILTGKVSPS (85 aa). Residues 25–963 lie on the Extracellular side of the membrane; it reads LTSREVNKTL…DDDDEFSSLE (939 aa). Asn31 carries an N-linked (GlcNAc...) asparagine glycan. LRR repeat units follow at residues 113-136, 138-161, 162-184, 186-211, 214-237, and 239-262; these read LEYL…RFIG, LKRL…QFQN, LTSL…VWLS, LSSL…ITKV, LKEL…VANS, and LISL…SWLF. Asn145 and Asn161 each carry an N-linked (GlcNAc...) asparagine glycan. The N-linked (GlcNAc...) asparagine glycan is linked to Asn236. Asn263 carries an N-linked (GlcNAc...) asparagine glycan. 14 LRR repeats span residues 265–288, 290–313, 314–337, 342–365, 366–388, 389–412, 413–436, 437–459, 461–483, 484–507, 509–532, 533–555, 557–581, and 583–607; these read STSL…RFGS, MYLE…SFGN, LTRL…LFLR, RKSL…VTRF, SSLK…RVGQ, VSSL…LALF, PSLR…IGKL, SQLR…MGQL, NLER…HFSN, LSSL…DWVP, FQLQ…LQTQ, NNYT…WFSN, PPEL…IVSK, and DYMI…NIQI. Residue Asn313 is glycosylated (N-linked (GlcNAc...) asparagine). Asn483 carries N-linked (GlcNAc...) asparagine glycosylation. Residues Asn534, Asn544, Asn564, and Asn593 are each glycosylated (N-linked (GlcNAc...) asparagine). The stretch at 608 to 626 is one LRR 21; degenerate repeat; it reads FYLHKNHFSGSISSICRNT. 6 LRR repeats span residues 627 to 651, 652 to 675, 677 to 698, 699 to 722, 723 to 747, and 749 to 773; these read IGAA…WMNM, SNLA…LGSL, NLEA…FSQC, QLLQ…IGTD, LLQL…ICQL, and FLQI…NFTI. Residues Asn650 and Asn663 are each glycosylated (N-linked (GlcNAc...) asparagine). N-linked (GlcNAc...) asparagine glycosylation is found at Asn770 and Asn778. 4 LRR repeats span residues 818–842, 843–866, 867–890, and 892–913; these read LLYL…IAEM, RGLR…IGQM, KLLE…LSNL, and FLSV…STQL. 3 N-linked (GlcNAc...) asparagine glycosylation sites follow: Asn849, Asn856, and Asn889. A C-cap/acidic domain region spans residues 914 to 963; that stretch reads QSFDRSSYSGNAQLCGPPLEECPGYAPPIDRGSNTNPQEHDDDDEFSSLE. A helical transmembrane segment spans residues 964–984; sequence FYVSMVLGFFVTFWGILGCLI. Over 985–1021 the chain is Cytoplasmic; sequence VNRSWRNAYFTFLTDMKSWLHMTSRVCFARLKGKLRN.

Belongs to the RLP family. Interacts with EIX elicitor protein.

It localises to the cell membrane. Functionally, involved in plant defense. Confers resistance to the fungal pathogen T.viride through recognition of the EIX elicitor protein. In Solanum lycopersicum (Tomato), this protein is Receptor-like protein EIX2.